The following is a 111-amino-acid chain: Large ribosomal subunit protein uL29 (111 aa).

Positions 1-85 are large ribosomal subunit protein uL29; sequence MTVAKELRQK…TKKTNEAAVN (85 aa). Positions 86 to 111 are unknown; it reads AWKQHLEANKAKLLKSRAKREDASKK.

This sequence belongs to the universal ribosomal protein uL29 family.

This is Large ribosomal subunit protein uL29 from Mycoplasma pneumoniae (strain ATCC 29342 / M129 / Subtype 1) (Mycoplasmoides pneumoniae).